The following is a 348-amino-acid chain: Dihydroorotase (348 aa).

H17 and H19 together coordinate Zn(2+). Substrate-binding positions include 19 to 21 and N45; that span reads HLR. Positions 103, 140, and 178 each coordinate Zn(2+). K103 is modified (N6-carboxylysine). H140 lines the substrate pocket. L223 lines the substrate pocket. D251 provides a ligand contact to Zn(2+). Residue D251 is part of the active site. Positions 255 and 267 each coordinate substrate.

Belongs to the metallo-dependent hydrolases superfamily. DHOase family. Class II DHOase subfamily. Homodimer. Zn(2+) serves as cofactor.

The enzyme catalyses (S)-dihydroorotate + H2O = N-carbamoyl-L-aspartate + H(+). The protein operates within pyrimidine metabolism; UMP biosynthesis via de novo pathway; (S)-dihydroorotate from bicarbonate: step 3/3. In terms of biological role, catalyzes the reversible cyclization of carbamoyl aspartate to dihydroorotate. The chain is Dihydroorotase from Salmonella typhi.